The sequence spans 246 residues: Probable transcriptional regulatory protein KPK_1906 (246 aa).

Belongs to the TACO1 family.

It localises to the cytoplasm. The sequence is that of Probable transcriptional regulatory protein KPK_1906 from Klebsiella pneumoniae (strain 342).